The primary structure comprises 295 residues: Indole-3-glycerol phosphate synthase (295 aa).

Belongs to the TrpC family.

It carries out the reaction 1-(2-carboxyphenylamino)-1-deoxy-D-ribulose 5-phosphate + H(+) = (1S,2R)-1-C-(indol-3-yl)glycerol 3-phosphate + CO2 + H2O. Its pathway is amino-acid biosynthesis; L-tryptophan biosynthesis; L-tryptophan from chorismate: step 4/5. This Synechococcus sp. (strain CC9605) protein is Indole-3-glycerol phosphate synthase.